A 426-amino-acid chain; its full sequence is Diaminobutyrate--2-oxoglutarate transaminase (426 aa).

The residue at position 272 (K272) is an N6-(pyridoxal phosphate)lysine.

Belongs to the class-III pyridoxal-phosphate-dependent aminotransferase family. Requires pyridoxal 5'-phosphate as cofactor.

The enzyme catalyses L-2,4-diaminobutanoate + 2-oxoglutarate = L-aspartate 4-semialdehyde + L-glutamate. It functions in the pathway amine and polyamine biosynthesis; ectoine biosynthesis; L-ectoine from L-aspartate 4-semialdehyde: step 1/3. Functionally, catalyzes reversively the conversion of L-aspartate beta-semialdehyde (ASA) to L-2,4-diaminobutyrate (DABA) by transamination with L-glutamate. The polypeptide is Diaminobutyrate--2-oxoglutarate transaminase (ectB) (Sporosarcina pasteurii (Bacillus pasteurii)).